Consider the following 572-residue polypeptide: Serine/threonine-protein kinase pak-1 (572 aa).

2 disordered regions span residues 1–71 (MKAF…SRPS) and 156–195 (QPYSTSSLPYHGNKIQDPRKMNPMTTSTSSAGYNSKQGVP). Residues 67 to 80 (ISRPSNFEHTIHVG) form the CRIB domain. Residues 81–294 (YDPKTGEFTG…IVSIGNPDRK (214 aa)) are linker. Polar residues predominate over residues 178-195 (PMTTSTSSAGYNSKQGVP). The Protein kinase domain occupies 295-546 (YRKVDKIGSG…ASQLLTHPFL (252 aa)). ATP contacts are provided by residues 301–309 (IGSGASGSV) and K324. The active-site Proton acceptor is D414.

Belongs to the protein kinase superfamily. STE Ser/Thr protein kinase family. STE20 subfamily. As to quaternary structure, interacts with cdc-42 (GTP-bound form) and cedd-10 (GTP-bound form). It depends on Mg(2+) as a cofactor. Requires Mn(2+) as cofactor. As to expression, specifically colocalized with cdc-42 and ced-10 at all hypodermal cell boundaries during embryo elongation throughout the second phase of embryogenesis. Expressed mainly in pharyngeal muscles, the CAN neurons, motor neurons in the ventral nerve cord, several cells in the tail region (including the B and Y cells from L1 to adult, the hypodermal blast cell T in the L1 and some of its progeny in later stages), and the distal tip cells.

Its subcellular location is the cell membrane. The protein resides in the cytoplasm. It localises to the cell projection. It is found in the axon. The protein localises to the perikaryon. It catalyses the reaction L-seryl-[protein] + ATP = O-phospho-L-seryl-[protein] + ADP + H(+). It carries out the reaction L-threonyl-[protein] + ATP = O-phospho-L-threonyl-[protein] + ADP + H(+). Its function is as follows. Required for hypodermal cell fusion, together with cdc-42 and ced-10, leading to embryonic body elongation, which involves dramatic cytoskeletal reorganization. Plays a redundant role with max-2 in dorsal axonal guidance in ventral cord commissural motoneurons and in P neuroblast migration. Acts probably downstream of Rho GTPases mig-2 and ced-10 to regulate these 2 processes. Involved in orientating axonal growth of HSN neurons. During gonad morphogenesis and probably in association with pix-1 and git-1, involved in the migration of distal tip cell (DTC) and in maintaining their sharp tapering morphology. In addition, plays a redundant role with max-2 in DTC-mediated guidance of gonad elongation. May phosphorylate mlc-4. This Caenorhabditis elegans protein is Serine/threonine-protein kinase pak-1 (pak-1).